The following is a 1074-amino-acid chain: Semaphorin-5A (1074 aa).

Residues 1–22 (MKGTCVIAWLFSSLGLWRLAHP) form the signal peptide. The Extracellular portion of the chain corresponds to 23-968 (EAQGTTQCQR…EEKRCGEFNM (946 aa)). The Sema domain occupies 35–484 (HPVISYKEIG…LREHVVKIPL (450 aa)). Cystine bridges form between cysteine 104–cysteine 114 and cysteine 131–cysteine 140. Residues asparagine 142, asparagine 168, asparagine 227, and asparagine 277 are each glycosylated (N-linked (GlcNAc...) asparagine). Disulfide bonds link cysteine 254–cysteine 357 and cysteine 278–cysteine 320. N-linked (GlcNAc...) asparagine glycans are attached at residues asparagine 323, asparagine 367, and asparagine 437. 2 disulfides stabilise this stretch: cysteine 487-cysteine 504 and cysteine 496-cysteine 513. N-linked (GlcNAc...) asparagine glycans are attached at residues asparagine 536 and asparagine 591. TSP type-1 domains follow at residues 540–593 (DGHF…ANCS), 595–651 (NGGW…LLCP), 653–702 (HMFW…NPCP), 707–765 (TTPW…GCST), 784–839 (NGAW…LPCP), 841–896 (DGVW…QPCP), and 897–944 (ESWS…VFDS). 6 disulfides stabilise this stretch: cysteine 607/cysteine 644, cysteine 611/cysteine 650, cysteine 622/cysteine 634, cysteine 665/cysteine 696, cysteine 669/cysteine 701, and cysteine 680/cysteine 686. N-linked (GlcNAc...) asparagine glycosylation occurs at asparagine 717. Disulfide bonds link cysteine 796/cysteine 833, cysteine 800/cysteine 838, cysteine 811/cysteine 823, cysteine 853/cysteine 890, cysteine 857/cysteine 895, and cysteine 868/cysteine 880. N-linked (GlcNAc...) asparagine glycosylation is present at asparagine 933. Residues 969–989 (FHMIAVGLSSSILGCLLTLLV) traverse the membrane as a helical segment. Topologically, residues 990-1074 (YTYCQRYQQQ…FTDLNNYDEY (85 aa)) are cytoplasmic.

The protein belongs to the semaphorin family. As to quaternary structure, binds PLXNB3.

The protein localises to the membrane. Its function is as follows. Bifunctional axonal guidance cue regulated by sulfated proteoglycans; attractive effects result from interactions with heparan sulfate proteoglycans (HSPGs), while the inhibitory effects depend on interactions with chondroitin sulfate proteoglycans (CSPGs). Ligand for receptor PLXNB3. In glioma cells, SEMA5A stimulation of PLXNB3 results in the disassembly of F-actin stress fibers, disruption of focal adhesions and cellular collapse as well as inhibition of cell migration and invasion through ARHGDIA-mediated inactivation of RAC1. May promote angiogenesis by increasing endothelial cell proliferation and migration and inhibiting apoptosis. In Homo sapiens (Human), this protein is Semaphorin-5A (SEMA5A).